The primary structure comprises 458 residues: ATP synthase subunit beta (458 aa).

147–154 (GGAGVGKT) serves as a coordination point for ATP.

The protein belongs to the ATPase alpha/beta chains family. As to quaternary structure, F-type ATPases have 2 components, CF(1) - the catalytic core - and CF(0) - the membrane proton channel. CF(1) has five subunits: alpha(3), beta(3), gamma(1), delta(1), epsilon(1). CF(0) has three main subunits: a(1), b(2) and c(9-12). The alpha and beta chains form an alternating ring which encloses part of the gamma chain. CF(1) is attached to CF(0) by a central stalk formed by the gamma and epsilon chains, while a peripheral stalk is formed by the delta and b chains.

The protein localises to the cell inner membrane. It carries out the reaction ATP + H2O + 4 H(+)(in) = ADP + phosphate + 5 H(+)(out). Produces ATP from ADP in the presence of a proton gradient across the membrane. The catalytic sites are hosted primarily by the beta subunits. This is ATP synthase subunit beta from Chromohalobacter salexigens (strain ATCC BAA-138 / DSM 3043 / CIP 106854 / NCIMB 13768 / 1H11).